We begin with the raw amino-acid sequence, 632 residues long: MAU2 chromatid cohesion factor homolog (632 aa).

2 TPR repeats span residues 453-486 and 493-526; these read GGFYYVQGLHAFHKNSFHEAKRFLRETLKMANAE and SCSLVLLSHVFLSIGNSKESMNMVTPAMQLASKI.

This sequence belongs to the SCC4/mau-2 family. Interacts with Nipped-B to form the cohesin loading complex.

It localises to the nucleus. Its subcellular location is the nucleoplasm. In terms of biological role, required for association of the cohesin complex with chromatin during interphase. Plays a role in sister chromatid cohesion and normal progression through prometaphase. The protein is MAU2 chromatid cohesion factor homolog of Drosophila melanogaster (Fruit fly).